The primary structure comprises 394 residues: Guanine nucleotide-binding protein G(s) subunit alpha (394 aa).

Residues 1-25 are disordered; the sequence is MGCLGDSKTEDQRNEEKAQREANKK. The N-palmitoyl glycine moiety is linked to residue Gly-2. Cys-3 carries S-palmitoyl cysteine lipidation. Residues 7–25 are compositionally biased toward basic and acidic residues; sequence SKTEDQRNEEKAQREANKK. The G-alpha domain maps to 39–394; that stretch reads ATHRLLLLGA…RMHLRQYELL (356 aa). A G1 motif region spans residues 42–55; sequence RLLLLGAGESGKST. 47–55 is a GTP binding site; that stretch reads GAGESGKST. Residue Ser-54 coordinates Mg(2+). The interval 68–90 is disordered; that stretch reads FNGEGGEEDPQAARSNSDGEKAT. A G2 motif region spans residues 196 to 204; the sequence is DLLRCRVLT. GTP contacts are provided by residues 197-204, 223-227, 292-295, and Ala-366; these read LLRCRVLT, DVGGQ, and NKQD. Residue Thr-204 coordinates Mg(2+). A G3 motif region spans residues 219 to 228; the sequence is FHMFDVGGQR. The segment at 288–295 is G4 motif; it reads ILFLNKQD. Residues 364–369 form a G5 motif region; sequence TCAVDT.

The protein belongs to the G-alpha family. G(s) subfamily. In terms of assembly, heterotrimeric G proteins are composed of 3 units; alpha, beta and gamma. The alpha chain contains the guanine nucleotide binding site. Interacts with CRY1; the interaction may block GPCR-mediated regulation of cAMP concentrations. Interacts with ADCY6 and stimulates its adenylyl cyclase activity. Interacts with ADCY2 and ADCY5. Stimulates the ADCY5 adenylyl cyclase activity. Interaction with SASH1.

It localises to the cell membrane. Guanine nucleotide-binding proteins (G proteins) function as transducers in numerous signaling pathways controlled by G protein-coupled receptors (GPCRs). Signaling involves the activation of adenylyl cyclases, resulting in increased levels of the signaling molecule cAMP. GNAS functions downstream of several GPCRs, including beta-adrenergic receptors. Stimulates the Ras signaling pathway via RAPGEF2. The polypeptide is Guanine nucleotide-binding protein G(s) subunit alpha (GNAS) (Cricetulus longicaudatus (Long-tailed dwarf hamster)).